A 129-amino-acid chain; its full sequence is Large ribosomal subunit protein uL22 (129 aa).

This sequence belongs to the universal ribosomal protein uL22 family. In terms of assembly, part of the 50S ribosomal subunit.

In terms of biological role, this protein binds specifically to 23S rRNA; its binding is stimulated by other ribosomal proteins, e.g. L4, L17, and L20. It is important during the early stages of 50S assembly. It makes multiple contacts with different domains of the 23S rRNA in the assembled 50S subunit and ribosome. Functionally, the globular domain of the protein is located near the polypeptide exit tunnel on the outside of the subunit, while an extended beta-hairpin is found that lines the wall of the exit tunnel in the center of the 70S ribosome. The protein is Large ribosomal subunit protein uL22 of Brucella suis biovar 1 (strain 1330).